A 340-amino-acid polypeptide reads, in one-letter code: Glyceraldehyde-3-phosphate dehydrogenase, cytosolic (340 aa).

NAD(+) contacts are provided by residues 16 to 17 (RI), aspartate 38, and arginine 85. D-glyceraldehyde 3-phosphate is bound by residues 156–158 (SCT), threonine 187, 216–217 (TG), and arginine 239. The Nucleophile role is filled by cysteine 157. Asparagine 321 contributes to the NAD(+) binding site.

The protein belongs to the glyceraldehyde-3-phosphate dehydrogenase family. Homotetramer.

Its subcellular location is the cytoplasm. The enzyme catalyses D-glyceraldehyde 3-phosphate + phosphate + NAD(+) = (2R)-3-phospho-glyceroyl phosphate + NADH + H(+). It participates in carbohydrate degradation; glycolysis; pyruvate from D-glyceraldehyde 3-phosphate: step 1/5. Key enzyme in glycolysis that catalyzes the first step of the pathway by converting D-glyceraldehyde 3-phosphate (G3P) into 3-phospho-D-glyceroyl phosphate. Essential for the maintenance of cellular ATP levels and carbohydrate metabolism. This chain is Glyceraldehyde-3-phosphate dehydrogenase, cytosolic (GAPC), found in Pinus sylvestris (Scotch pine).